The primary structure comprises 232 residues: Glutathione-specific gamma-glutamylcyclotransferase (232 aa).

A substrate-binding site is contributed by 10-15 (VLGYGS). Glu115 (proton acceptor) is an active-site residue.

This sequence belongs to the gamma-glutamylcyclotransferase family. ChaC subfamily.

Its subcellular location is the cytoplasm. It localises to the nucleus. It carries out the reaction glutathione = L-cysteinylglycine + 5-oxo-L-proline. Functionally, catalyzes the cleavage of glutathione into 5-oxo-L-proline and a Cys-Gly dipeptide. Acts specifically on glutathione, but not on other gamma-glutamyl peptides. Allows utilization of gluthathione through subsequent cleavage of the Cys-Gly dipeptide by Cys-Gly metallodipeptidase DUG1. The protein is Glutathione-specific gamma-glutamylcyclotransferase of Saccharomyces cerevisiae (strain ATCC 204508 / S288c) (Baker's yeast).